The sequence spans 98 residues: NADH-ubiquinone oxidoreductase chain 4L (98 aa).

Helical transmembrane passes span 1 to 21 (MSLT…GLLM), 29 to 49 (SLLC…ITIL), and 61 to 81 (IILL…LVMV).

Belongs to the complex I subunit 4L family. Core subunit of respiratory chain NADH dehydrogenase (Complex I) which is composed of 45 different subunits.

It localises to the mitochondrion inner membrane. The enzyme catalyses a ubiquinone + NADH + 5 H(+)(in) = a ubiquinol + NAD(+) + 4 H(+)(out). In terms of biological role, core subunit of the mitochondrial membrane respiratory chain NADH dehydrogenase (Complex I) which catalyzes electron transfer from NADH through the respiratory chain, using ubiquinone as an electron acceptor. Part of the enzyme membrane arm which is embedded in the lipid bilayer and involved in proton translocation. This Ectophylla alba (White bat) protein is NADH-ubiquinone oxidoreductase chain 4L (MT-ND4L).